The sequence spans 268 residues: E3 ubiquitin-protein ligase IAP-3 (268 aa).

BIR repeat units lie at residues K18–V84 and E111–V178. Zn(2+) is bound by residues C148, C151, H168, and C175. Residues C221–R256 form an RING-type zinc finger.

The protein belongs to the IAP family. In terms of processing, auto-ubiquitinated.

It catalyses the reaction S-ubiquitinyl-[E2 ubiquitin-conjugating enzyme]-L-cysteine + [acceptor protein]-L-lysine = [E2 ubiquitin-conjugating enzyme]-L-cysteine + N(6)-ubiquitinyl-[acceptor protein]-L-lysine.. Functionally, RING-finger E3 ubiquitin ligase required to prevent cellular apoptosis in infected cells. Ubiquitinates and subsequently targets host pro-apoptotic cellular proteins such as HID for degradation by the proteasome. The polypeptide is E3 ubiquitin-protein ligase IAP-3 (IAP3) (Orgyia pseudotsugata multicapsid polyhedrosis virus (OpMNPV)).